The chain runs to 348 residues: Phospho-2-dehydro-3-deoxyheptonate aldolase, Trp-sensitive (348 aa).

This sequence belongs to the class-I DAHP synthase family.

The catalysed reaction is D-erythrose 4-phosphate + phosphoenolpyruvate + H2O = 7-phospho-2-dehydro-3-deoxy-D-arabino-heptonate + phosphate. It participates in metabolic intermediate biosynthesis; chorismate biosynthesis; chorismate from D-erythrose 4-phosphate and phosphoenolpyruvate: step 1/7. In terms of biological role, stereospecific condensation of phosphoenolpyruvate (PEP) and D-erythrose-4-phosphate (E4P) giving rise to 3-deoxy-D-arabino-heptulosonate-7-phosphate (DAHP). In Enterobacter agglomerans (Erwinia herbicola), this protein is Phospho-2-dehydro-3-deoxyheptonate aldolase, Trp-sensitive (aroH).